Here is a 1009-residue protein sequence, read N- to C-terminus: Type VII secretion system accessory factor EsaA (1009 aa).

A helical transmembrane segment spans residues 7–27 (IYALIVTLIIIIAIVSMIFFV). Residues 680–697 (TFAEEPQEPKIDKGKNDE) are compositionally biased toward basic and acidic residues. The interval 680 to 707 (TFAEEPQEPKIDKGKNDEFNTMSSNLDK) is disordered. The next 5 helical transmembrane spans lie at 822–842 (ISPT…AYIF), 869–889 (VITS…VGLI), 903–923 (KFIL…TYLL), 928–948 (SIGM…MNNL), and 979–999 (IGLV…LNMF).

It belongs to the EsaA family. Homodimer. Interacts with EssB.

The protein localises to the cell membrane. Functionally, component of the type VII secretion system (Ess). Provides together with EssB and other components such as EssC and EssE a secretion plateform accross the cytoplasmic membrane in the host. The sequence is that of Type VII secretion system accessory factor EsaA from Staphylococcus aureus (strain USA300).